A 387-amino-acid polypeptide reads, in one-letter code: 1-deoxy-D-xylulose 5-phosphate reductoisomerase (387 aa).

Residues Thr-11, Gly-12, Ser-13, Ile-14, Gly-37, Arg-38, Gln-39, and Asn-127 each coordinate NADPH. Lys-128 lines the 1-deoxy-D-xylulose 5-phosphate pocket. An NADPH-binding site is contributed by Glu-129. Position 153 (Asp-153) interacts with Mn(2+). The 1-deoxy-D-xylulose 5-phosphate site is built by Ser-154, Glu-155, Ser-179, and His-200. Position 155 (Glu-155) interacts with Mn(2+). An NADPH-binding site is contributed by Gly-206. Residues Ser-213, Asn-218, Lys-219, and Glu-222 each contribute to the 1-deoxy-D-xylulose 5-phosphate site. Glu-222 is a binding site for Mn(2+).

Belongs to the DXR family. The cofactor is Mg(2+). Mn(2+) serves as cofactor.

It catalyses the reaction 2-C-methyl-D-erythritol 4-phosphate + NADP(+) = 1-deoxy-D-xylulose 5-phosphate + NADPH + H(+). Its pathway is isoprenoid biosynthesis; isopentenyl diphosphate biosynthesis via DXP pathway; isopentenyl diphosphate from 1-deoxy-D-xylulose 5-phosphate: step 1/6. Functionally, catalyzes the NADPH-dependent rearrangement and reduction of 1-deoxy-D-xylulose-5-phosphate (DXP) to 2-C-methyl-D-erythritol 4-phosphate (MEP). The protein is 1-deoxy-D-xylulose 5-phosphate reductoisomerase of Symbiobacterium thermophilum (strain DSM 24528 / JCM 14929 / IAM 14863 / T).